The chain runs to 116 residues: Large ribosomal subunit protein bL19 (116 aa).

This sequence belongs to the bacterial ribosomal protein bL19 family.

In terms of biological role, this protein is located at the 30S-50S ribosomal subunit interface and may play a role in the structure and function of the aminoacyl-tRNA binding site. The protein is Large ribosomal subunit protein bL19 of Flavobacterium psychrophilum (strain ATCC 49511 / DSM 21280 / CIP 103535 / JIP02/86).